The following is a 45-amino-acid chain: Large ribosomal subunit protein bL34c (45 aa).

This sequence belongs to the bacterial ribosomal protein bL34 family.

The protein resides in the plastid. Its subcellular location is the chloroplast. The sequence is that of Large ribosomal subunit protein bL34c from Emiliania huxleyi (Coccolithophore).